We begin with the raw amino-acid sequence, 175 residues long: Protein OPG036 (175 aa).

It belongs to the poxviridae OPG036 family.

It localises to the host nucleus. Functionally, plays a role in the inhibition of host innate immune response. Within the host nucleus, inhibits activation of interferon-beta promoter by inhibiting IRF3 activation. The polypeptide is Protein OPG036 (OPG036) (Bos taurus (Bovine)).